A 72-amino-acid polypeptide reads, in one-letter code: Palustrin-2CG1 (72 aa).

The N-terminal stretch at Met-1 to Cys-22 is a signal peptide. Residues Gln-23–Val-39 constitute a propeptide, removed in mature form. Cys-64 and Cys-70 are disulfide-bonded.

Expressed by the skin glands.

The protein localises to the secreted. Functionally, antimicrobial peptide active against a variety of Gram-positive and some Gram-negative bacterial strains. Has antifungal activity against a slime mold isolate. Has hemolytic activity against human erythrocytes. The protein is Palustrin-2CG1 of Amolops chunganensis (Chungan torrent frog).